Here is a 316-residue protein sequence, read N- to C-terminus: Ribosomal RNA small subunit methyltransferase H (316 aa).

S-adenosyl-L-methionine-binding positions include Ser35–His37, Asp55, Phe84, Asp105, and Gln112.

It belongs to the methyltransferase superfamily. RsmH family.

The protein resides in the cytoplasm. The enzyme catalyses cytidine(1402) in 16S rRNA + S-adenosyl-L-methionine = N(4)-methylcytidine(1402) in 16S rRNA + S-adenosyl-L-homocysteine + H(+). In terms of biological role, specifically methylates the N4 position of cytidine in position 1402 (C1402) of 16S rRNA. This chain is Ribosomal RNA small subunit methyltransferase H, found in Streptococcus pyogenes serotype M6 (strain ATCC BAA-946 / MGAS10394).